The primary structure comprises 312 residues: tRNA dimethylallyltransferase (312 aa).

Residue 15–22 (GPTAAGKS) coordinates ATP. Substrate is bound at residue 17–22 (TAAGKS). The interaction with substrate tRNA stretch occupies residues 40–43 (DSMQ).

It belongs to the IPP transferase family. As to quaternary structure, monomer. The cofactor is Mg(2+).

The catalysed reaction is adenosine(37) in tRNA + dimethylallyl diphosphate = N(6)-dimethylallyladenosine(37) in tRNA + diphosphate. In terms of biological role, catalyzes the transfer of a dimethylallyl group onto the adenine at position 37 in tRNAs that read codons beginning with uridine, leading to the formation of N6-(dimethylallyl)adenosine (i(6)A). The polypeptide is tRNA dimethylallyltransferase (Streptomyces griseus subsp. griseus (strain JCM 4626 / CBS 651.72 / NBRC 13350 / KCC S-0626 / ISP 5235)).